The primary structure comprises 308 residues: Transcription factor JunB (308 aa).

The basic motif stretch occupies residues 229–256 (RIKAERKRLRNRLAATKCRKRKLERISR). Residues 229 to 292 (RIKAERKRLR…AQLKQKVLRH (64 aa)) enclose the bZIP domain. A leucine-zipper region spans residues 257–285 (LEEKVKVLKNDNAGLSNTASVLRDQVAQL).

This sequence belongs to the bZIP family. Jun subfamily. In terms of assembly, binds DNA as a homodimer or as a heterodimer with another member of the jun/fos family.

Its subcellular location is the nucleus. Transcription factor involved in regulating gene activity following the primary growth factor response. Binds to the DNA sequence 5'-TGA[CG]TCA-3'. The sequence is that of Transcription factor JunB (junb) from Cyprinus carpio (Common carp).